A 211-amino-acid chain; its full sequence is Large ribosomal subunit protein uL4 (211 aa).

The tract at residues 40-80 (QQAHSRQGTASTLTRSEVRGGGRKPYKQKGTGRARQGSIRT) is disordered. The segment covering 41 to 54 (QAHSRQGTASTLTR) has biased composition (polar residues). The span at 60–71 (GGRKPYKQKGTG) shows a compositional bias: basic residues.

The protein belongs to the universal ribosomal protein uL4 family. Part of the 50S ribosomal subunit.

Its function is as follows. One of the primary rRNA binding proteins, this protein initially binds near the 5'-end of the 23S rRNA. It is important during the early stages of 50S assembly. It makes multiple contacts with different domains of the 23S rRNA in the assembled 50S subunit and ribosome. Forms part of the polypeptide exit tunnel. The sequence is that of Large ribosomal subunit protein uL4 from Prochlorococcus marinus (strain MIT 9211).